Reading from the N-terminus, the 232-residue chain is Platelet-activating factor acetylhydrolase IB subunit alpha1 (232 aa).

The tract at residues 1 to 20 (MSGEGENPASKPTPVQDVQG) is disordered. Residue Ser-2 is modified to N-acetylserine. A Phosphoserine modification is found at Ser-2. Residues Ser-48, Asp-193, and His-196 contribute to the active site.

Belongs to the 'GDSL' lipolytic enzyme family. Platelet-activating factor acetylhydrolase IB beta/gamma subunits subfamily. As to quaternary structure, forms a catalytic dimer which is either homodimer (alpha1/alpha1 homodimer) or heterodimer with PAFAH1B2 (alpha1/alpha2 heterodimer). Component of the cytosolic (PAF-AH (I)) heterotetrameric enzyme, which is composed of PAFAH1B1 (beta), PAFAH1B2 (alpha2) and PAFAH1B3 (alpha1) subunits. The catalytic activity of the enzyme resides in the alpha1 (PAFAH1B3) and alpha2 (PAFAH1B2) subunits, whereas the beta subunit (PAFAH1B1) has regulatory activity. Trimer formation is not essential for the catalytic activity. Interacts with VLDLR; this interaction may modulate the Reelin pathway.

It is found in the cytoplasm. The enzyme catalyses a 1-O-alkyl-2-acetyl-sn-glycero-3-phosphocholine + H2O = a 1-O-alkyl-sn-glycero-3-phosphocholine + acetate + H(+). It catalyses the reaction 1-O-hexadecyl-2-acetyl-sn-glycero-3-phosphocholine + H2O = 1-O-hexadecyl-sn-glycero-3-phosphocholine + acetate + H(+). The catalysed reaction is 1-O-hexadecyl-2-acetyl-sn-glycero-3-phosphate + H2O = 1-O-hexadecyl-sn-glycero-3-phosphate + acetate + H(+). With respect to regulation, beta subunit (PAFAH1B1) inhibits the acetylhydrolase activity of the alpha1/alpha1 catalytic homodimer. Alpha1 catalytic subunit of the cytosolic type I platelet-activating factor (PAF) acetylhydrolase (PAF-AH (I)) heterotetrameric enzyme that catalyzes the hydrolyze of the acetyl group at the sn-2 position of PAF and its analogs and modulates the action of PAF. The activity and substrate specificity of PAF-AH (I) are affected by its subunit composition. Both alpha1/alpha1 homodimer (PAFAH1B3/PAFAH1B3 homodimer) and alpha1/alpha2 heterodimer(PAFAH1B3/PAFAH1B2 heterodimer) hydrolyze 1-O-alkyl-2-acetyl-sn-glycero-3-phosphoric acid (AAGPA) more efficiently than PAF, but they have little hydrolytic activity towards 1-O-alkyl-2-acetyl-sn-glycero-3-phosphorylethanolamine (AAGPE). Plays an important role during the development of brain. This Mus musculus (Mouse) protein is Platelet-activating factor acetylhydrolase IB subunit alpha1.